We begin with the raw amino-acid sequence, 301 residues long: GPN-loop GTPase 3 (301 aa).

13–18 is a GTP binding site; it reads GAGKST. The Gly-Pro-Asn (GPN)-loop; involved in dimer interface signature appears at 70–72; sequence GPN. 176–179 lines the GTP pocket; it reads SKMD. Residues 212–232 are disordered; that stretch reads IAEGQDAEDDESKAPDEKDQV. A compositionally biased stretch (basic and acidic residues) spans 223 to 232; it reads SKAPDEKDQV.

It belongs to the GPN-loop GTPase family. In terms of assembly, heterodimers with GPN1 or GPN2. Binds to RNA polymerase II (RNAPII).

Functionally, small GTPase required for proper nuclear import of RNA polymerase II and III (RNAPII and RNAPIII). May act at an RNAP assembly step prior to nuclear import. This chain is GPN-loop GTPase 3, found in Gibberella zeae (strain ATCC MYA-4620 / CBS 123657 / FGSC 9075 / NRRL 31084 / PH-1) (Wheat head blight fungus).